The chain runs to 109 residues: MENFKLKIKKEDKVKVLTGKDKGKIGKVLKVLRKKNRAVVENINVAKIHQRPTQANPQGGIVDKPMPVDCSNLMIMCNSCIKPVRVGIKQLEDGKKVRICKSCNEQIDA.

Belongs to the universal ribosomal protein uL24 family. Part of the 50S ribosomal subunit.

Its function is as follows. One of two assembly initiator proteins, it binds directly to the 5'-end of the 23S rRNA, where it nucleates assembly of the 50S subunit. Functionally, one of the proteins that surrounds the polypeptide exit tunnel on the outside of the subunit. The chain is Large ribosomal subunit protein uL24 from Desulforapulum autotrophicum (strain ATCC 43914 / DSM 3382 / VKM B-1955 / HRM2) (Desulfobacterium autotrophicum).